We begin with the raw amino-acid sequence, 428 residues long: MRTQTFPPSSSSSRTTHPKKNRHSSNSSSMALVTPAKSSTGAAPKQSSQSGWDYWTRVYSDDAQTTGTPRDVRISDMLSSESLIRAKLLFLNVPSLPSAHKNIILNLVKRELNHDISIQDVVVVPPAKWFLNFYRPEDALKVMKHLNGYSYRGHILAVRFCYPDGTYGDESALTELVQCTNSAKGRILEKKDIVQDTFAVECWTKTEFDSLKVFEKELTNLLKAHAYLPYHTVLQSMRNLFTCKVQSELSSMFISDALAQWPTGLIRIFNRNVKVVSNTMCLSSSSYYTQRIHDSALEGGCSVHRNSWEPTVPDDIRSEVQLIQYTNSFLGHFGPQNIDVDIPIRILAQSLRGTWPKTGPKLAALLTEISSGFVLINRVLYLSSNLHHHEKIIDNLACFQDDCTDVYFLPLSCTTEDQKGKTVDYEDI.

Residues 1–49 (MRTQTFPPSSSSSRTTHPKKNRHSSNSSSMALVTPAKSSTGAAPKQSSQ) are disordered. Polar residues predominate over residues 24–49 (SSNSSSMALVTPAKSSTGAAPKQSSQ).

This is an uncharacterized protein from Caenorhabditis elegans.